A 233-amino-acid polypeptide reads, in one-letter code: Methyltransferase srdJ (233 aa).

Positions 1–32 (MFQVQTAGTRTGTSSPDTTTSEAGLGSTPPMP) are disordered. A compositionally biased stretch (low complexity) spans 9–21 (TRTGTSSPDTTTS). S-adenosyl-L-methionine is bound by residues W40, W52, and G81. The Required for methyltransferase activity motif lies at 140 to 146 (EISSQKY).

This sequence belongs to the methyltransferase superfamily.

Methyltransferase; part of the gene cluster that mediates the biosynthesis of sordarial, a salicylic aldehyde structurally related to the phytotoxin pyriculol. The most interesting aspect of this pathway is formation of an aromatic product from the highly reducing polyketide synthase srdA. SrdA synthesizes a reduced polyketide chain from one molecule of acetyl-CoA and five molecules of malonyl-CoA. The polyketide chain is then reductively released as an aldehyde. The oxidoreductases srdC, srdD and srdE then oxidize one of the hydroxy groups to facilitate the intramolecular aldol condensation, followed by dehydration to yield a salicylic aldehyde. This aldehyde can undergo facile reduction by endogenous reductases to yield the alcohol 1-hydroxy-2-hydroxymethyl-3-pent-1,3-dienylbenzene. The flavin-dependent srdI counteract against the propensity of the aldehydes to be reduced under physiological conditions and is responsible for reoxidizing 1-hydroxy-2-hydroxymethyl-3-pent-1,3-dienylbenzene back to the salicylic aldehyde. This salicylic aldehyde is then selectively epoxidized by the cupin-domain-containing oxidoreductase srdB to yield the epoxide, which can be hydrolyzed stereoselectively by the hydrolase srdG to give the final product sordarial. This chain is Methyltransferase srdJ, found in Neurospora crassa (strain ATCC 24698 / 74-OR23-1A / CBS 708.71 / DSM 1257 / FGSC 987).